An 88-amino-acid chain; its full sequence is PTS system cellobiose-specific EIIB component (88 aa).

Residues 3–88 (KKRIYLFCSA…IDTLLYGKVD (86 aa)) enclose the PTS EIIB type-3 domain. The active-site Phosphocysteine intermediate is C10. A Phosphocysteine; by EIIA modification is found at C10.

The protein localises to the cytoplasm. It catalyses the reaction D-cellobiose(out) + N(pros)-phospho-L-histidyl-[protein] = 6-phospho-beta-D-glucosyl-(1-&gt;4)-D-glucose(in) + L-histidyl-[protein]. Its function is as follows. The phosphoenolpyruvate-dependent sugar phosphotransferase system (sugar PTS), a major carbohydrate active transport system, catalyzes the phosphorylation of incoming sugar substrates concomitantly with their translocation across the cell membrane. The enzyme II CelABD PTS system is involved in cellobiose transport. The chain is PTS system cellobiose-specific EIIB component from Aeromonas hydrophila.